The primary structure comprises 228 residues: Uracil-DNA glycosylase (228 aa).

The active-site Proton acceptor is the Asp-64.

Belongs to the uracil-DNA glycosylase (UDG) superfamily. UNG family.

The protein resides in the cytoplasm. It catalyses the reaction Hydrolyzes single-stranded DNA or mismatched double-stranded DNA and polynucleotides, releasing free uracil.. Functionally, excises uracil residues from the DNA which can arise as a result of misincorporation of dUMP residues by DNA polymerase or due to deamination of cytosine. The protein is Uracil-DNA glycosylase of Pectobacterium atrosepticum (strain SCRI 1043 / ATCC BAA-672) (Erwinia carotovora subsp. atroseptica).